The sequence spans 267 residues: Tryptophan synthase alpha chain (267 aa).

Residues E51 and D62 each act as proton acceptor in the active site.

The protein belongs to the TrpA family. As to quaternary structure, tetramer of two alpha and two beta chains.

The catalysed reaction is (1S,2R)-1-C-(indol-3-yl)glycerol 3-phosphate + L-serine = D-glyceraldehyde 3-phosphate + L-tryptophan + H2O. Its pathway is amino-acid biosynthesis; L-tryptophan biosynthesis; L-tryptophan from chorismate: step 5/5. Functionally, the alpha subunit is responsible for the aldol cleavage of indoleglycerol phosphate to indole and glyceraldehyde 3-phosphate. This chain is Tryptophan synthase alpha chain, found in Prochlorococcus marinus (strain SARG / CCMP1375 / SS120).